A 103-amino-acid polypeptide reads, in one-letter code: Large ribosomal subunit protein bL21 (103 aa).

Belongs to the bacterial ribosomal protein bL21 family. As to quaternary structure, part of the 50S ribosomal subunit. Contacts protein L20.

This protein binds to 23S rRNA in the presence of protein L20. This chain is Large ribosomal subunit protein bL21, found in Paracidovorax citrulli (strain AAC00-1) (Acidovorax citrulli).